A 46-amino-acid polypeptide reads, in one-letter code: Photosystem II reaction center protein K (46 aa).

A propeptide spanning residues 1–9 (MESILMIFA) is cleaved from the precursor. Residues 25-45 (LPVIPVLFLLLAFVWQAAVSF) form a helical membrane-spanning segment.

This sequence belongs to the PsbK family. As to quaternary structure, PSII is composed of 1 copy each of membrane proteins PsbA, PsbB, PsbC, PsbD, PsbE, PsbF, PsbH, PsbI, PsbJ, PsbK, PsbL, PsbM, PsbT, PsbX, PsbY, PsbZ, Psb30/Ycf12, at least 3 peripheral proteins of the oxygen-evolving complex and a large number of cofactors. It forms dimeric complexes.

The protein localises to the plastid. The protein resides in the chloroplast thylakoid membrane. One of the components of the core complex of photosystem II (PSII). PSII is a light-driven water:plastoquinone oxidoreductase that uses light energy to abstract electrons from H(2)O, generating O(2) and a proton gradient subsequently used for ATP formation. It consists of a core antenna complex that captures photons, and an electron transfer chain that converts photonic excitation into a charge separation. The polypeptide is Photosystem II reaction center protein K (Stigeoclonium helveticum (Green alga)).